The chain runs to 834 residues: Taste receptor type 1 member 2 (834 aa).

Positions 1–19 (MEPRVRTVCFLFFLLRVLA) are cleaved as a signal peptide. Residues 20–561 (EPAKNSDFYL…SFLEWHEAAT (542 aa)) are Extracellular-facing. 7 N-linked (GlcNAc...) asparagine glycosylation sites follow: Asn-84, Asn-292, Asn-312, Asn-363, Asn-423, Asn-482, and Asn-522. The chain crosses the membrane as a helical span at residues 562 to 582 (IAVALLAALGFLSTLAILVIF). Residues 583–597 (WRHFETPMVRSAGGP) lie on the Cytoplasmic side of the membrane. Residues 598-618 (MCFLMLTLLLVAYMVVPVYVG) form a helical membrane-spanning segment. The Extracellular segment spans residues 619–630 (LPKVSTCLCRQA). Residues 631–651 (LFPVCFTICISCIAVRSFQIV) form a helical membrane-spanning segment. Residues 652-676 (CVFKMASRFPRAYSYWVRYQGSYVS) are Cytoplasmic-facing. The helical transmembrane segment at 677 to 697 (VAFITALKMVTVVISLLATGL) threads the bilayer. The Extracellular portion of the chain corresponds to 698–722 (NPTTRTDTDDPKIMIISCNPNYRNS). A helical membrane pass occupies residues 723-743 (LLFNTSLDLLLSVAGFSFAYM). The Cytoplasmic segment spans residues 744 to 755 (GKELPTNYNEAK). The chain crosses the membrane as a helical span at residues 756–776 (FITFSMTFYFTSSVSLCTFMS). Over 777–779 (VYD) the chain is Extracellular. The helical transmembrane segment at 780-800 (GVLVTIVDLLVTVFNLLAISL) threads the bilayer. Over 801-834 (GYFGPKCYMILFYPERNTPAYFNSMIQGYTMRRD) the chain is Cytoplasmic.

It belongs to the G-protein coupled receptor 3 family. TAS1R subfamily. As to quaternary structure, forms heterodimers with TAS1R3.

It is found in the cell membrane. Putative taste receptor. TAS1R2/TAS1R3 recognizes diverse natural and synthetic sweeteners. The chain is Taste receptor type 1 member 2 (TAS1R2) from Saimiri sciureus (Common squirrel monkey).